The chain runs to 290 residues: Small ribosomal subunit protein bS6 (290 aa).

The disordered stretch occupies residues 208–233 (VEEAKTTAKKPAAPKMSAAERAKVDG).

Belongs to the bacterial ribosomal protein bS6 family.

In terms of biological role, binds together with bS18 to 16S ribosomal RNA. In Mesoplasma florum (strain ATCC 33453 / NBRC 100688 / NCTC 11704 / L1) (Acholeplasma florum), this protein is Small ribosomal subunit protein bS6.